A 265-amino-acid polypeptide reads, in one-letter code: 4-hydroxy-tetrahydrodipicolinate reductase (265 aa).

9-14 contacts NAD(+); the sequence is GPRGRM. Residue Lys37 coordinates NADP(+). Residues 99-101 and 125-128 contribute to the NAD(+) site; these read GTT and APNF. His155 (proton donor/acceptor) is an active-site residue. His156 contributes to the (S)-2,3,4,5-tetrahydrodipicolinate binding site. The active-site Proton donor is Lys159. 165-166 provides a ligand contact to (S)-2,3,4,5-tetrahydrodipicolinate; the sequence is GT. The segment covering 178–190 has biased composition (basic and acidic residues); sequence RESQKQGHPKEEE. Residues 178–200 form a disordered region; it reads RESQKQGHPKEEETLPGARGADM.

Belongs to the DapB family.

It localises to the cytoplasm. It catalyses the reaction (S)-2,3,4,5-tetrahydrodipicolinate + NAD(+) + H2O = (2S,4S)-4-hydroxy-2,3,4,5-tetrahydrodipicolinate + NADH + H(+). The catalysed reaction is (S)-2,3,4,5-tetrahydrodipicolinate + NADP(+) + H2O = (2S,4S)-4-hydroxy-2,3,4,5-tetrahydrodipicolinate + NADPH + H(+). The protein operates within amino-acid biosynthesis; L-lysine biosynthesis via DAP pathway; (S)-tetrahydrodipicolinate from L-aspartate: step 4/4. In terms of biological role, catalyzes the conversion of 4-hydroxy-tetrahydrodipicolinate (HTPA) to tetrahydrodipicolinate. The protein is 4-hydroxy-tetrahydrodipicolinate reductase of Oceanobacillus iheyensis (strain DSM 14371 / CIP 107618 / JCM 11309 / KCTC 3954 / HTE831).